The sequence spans 119 residues: U9-hexatoxin-Hi1 (119 aa).

A signal peptide spans 1–17 (MKLYLVILVTSVALAAA). A propeptide spanning residues 18–53 (SPTRTKEEPIEDELLEALLSVEKSLFNEETTVMEKR) is cleaved from the precursor. 4 disulfide bridges follow: Cys55-Cys73, Cys66-Cys79, Cys70-Cys117, and Cys72-Cys88.

Belongs to the neurotoxin 03 (Tx2) family. 03 subfamily. In terms of tissue distribution, expressed by the venom gland.

The protein resides in the secreted. Functionally, probable ion channel inhibitor. The sequence is that of U9-hexatoxin-Hi1 from Hadronyche infensa (Fraser island funnel-web spider).